The following is a 684-amino-acid chain: Divalent metal transporter 1 (684 aa).

Over 1–228 the chain is Cytoplasmic; sequence MEKDFTERST…YRNKLSLYNK (228 aa). The disordered stretch occupies residues 153–195; sequence NKRNNNNNNNNNNNNNNNNNNNNNNNNNNNNNNNNSNNVDNRK. Low complexity predominate over residues 156–191; that stretch reads NNNNNNNNNNNNNNNNNNNNNNNNNNNNNNNNSNNV. Residues 229 to 247 traverse the membrane as a helical segment; it reads LRMCFNYFGPGWIVAIAYL. The Vacuolar portion of the chain corresponds to 248-275; it reads DPGNLCSNLNVGLIRSPDPTLEKDYSGY. A helical transmembrane segment spans residues 276–299; the sequence is YLLWIMVYGHMLGFIFQVLSMRLG. The Cytoplasmic segment spans residues 300–319; that stretch reads HVTGLDLASLCSKEFDRTTS. Residues 320 to 345 form a helical membrane-spanning segment; that stretch reads TIIYVLVQIAIWGAHIQAIIGTFIAL. Residues 346-350 are Vacuolar-facing; that stretch reads NLIFG. The helical transmembrane segment at 351 to 370 threads the bilayer; that stretch reads ISVKVAIFYTLFEAIIYSFL. Topologically, residues 371–381 are cytoplasmic; that stretch reads ENKSLGLLENV. The helical transmembrane segment at 382 to 404 threads the bilayer; the sequence is LSFLVGILAVSFFVNVFMTPINF. Over 405 to 423 the chain is Vacuolar; sequence KELAISILYPRIPKGKEID. A helical membrane pass occupies residues 424 to 445; that stretch reads ALALLGSIISAHIFYLHTNLTA. Over 446–465 the chain is Cytoplasmic; sequence KKKSVICNDLSLRRYNTLGT. The helical transmembrane segment at 466–487 threads the bilayer; sequence IESGGSLFLSCLTNCIIVLTFA. Residues 488–515 lie on the Vacuolar side of the membrane; the sequence is EVNLKSFERRDQYNLFTAYEVMRKSFGK. The helical transmembrane segment at 516–534 threads the bilayer; sequence ISMYIWSFGLLSSGNNSSF. The Cytoplasmic segment spans residues 535-554; it reads MCEYASKSVVEGFLNKKINT. The chain crosses the membrane as a helical span at residues 555–573; that stretch reads FVRVFTFRLMLFSLLYMFL. Topologically, residues 574–584 are vacuolar; it reads TLNKYTLDQLT. Residues 585–603 traverse the membrane as a helical segment; the sequence is NFINVIQVLLLPMATIPLY. Residues 604–622 lie on the Cytoplasmic side of the membrane; sequence RFSIHENVLGEFRLKKFPK. The helical transmembrane segment at 623-645 threads the bilayer; it reads FAVFLIIIAIIISNVLLTFLDFV. Residues 646–650 lie on the Vacuolar side of the membrane; the sequence is HKETS. Residues 651–673 form a helical membrane-spanning segment; the sequence is LITIFFLVIFSFLYFGFIIYFFN. At 674–684 the chain is on the cytoplasmic side; that stretch reads IPIKKNYIQRN.

It belongs to the NRAMP (TC 2.A.55) family.

Its subcellular location is the vacuole membrane. The enzyme catalyses Fe(2+)(in) = Fe(2+)(out). Functionally, iron transporter. Required for parasite development during the blood stages. Required for apicoplast biogenesis. Required for mitochondrial polarization. The sequence is that of Divalent metal transporter 1 from Plasmodium falciparum (isolate 3D7).